The following is a 459-amino-acid chain: NADH oxidase (459 aa).

Asn10 lines the FAD pocket. Catalysis depends on His11, which acts as the Proton acceptor. FAD-binding residues include Ala12, Asp34, Gln35, Cys44, Val81, Ala110, Ser113, Lys143, and Tyr172. Cys44 (redox-active) is an active-site residue. Cys44 carries the cysteine sulfinic acid (-SO2H) modification. NAD(+) contacts are provided by Ile173, Asp192, Tyr201, and Gly256. FAD is bound at residue Asp294. Ala310 is an NAD(+) binding site. 3 residues coordinate FAD: Leu311, Ala312, and Ser313. Gly341 serves as a coordination point for NAD(+). Phe439 is an FAD binding site.

Belongs to the class-III pyridine nucleotide-disulfide oxidoreductase family. FAD serves as cofactor.

It localises to the secreted. Its subcellular location is the cell wall. It catalyses the reaction 2 NADH + O2 + 2 H(+) = 2 NAD(+) + 2 H2O. Its function is as follows. Catalyzes the four-electron reduction of molecular oxygen to water. Plays a role in redox balance maintenance. May be involved in mediating bacterial adhesion to host cells. May be considered a potential virulence factor. The protein is NADH oxidase of Streptococcus pneumoniae (strain ATCC BAA-255 / R6).